The primary structure comprises 382 residues: Mannitol-1-phosphate 5-dehydrogenase (382 aa).

An NAD(+)-binding site is contributed by 4–15; it reads AVHFGAGNIGRG.

Belongs to the mannitol dehydrogenase family.

The enzyme catalyses D-mannitol 1-phosphate + NAD(+) = beta-D-fructose 6-phosphate + NADH + H(+). The sequence is that of Mannitol-1-phosphate 5-dehydrogenase from Vibrio campbellii (strain ATCC BAA-1116).